We begin with the raw amino-acid sequence, 272 residues long: uncharacterized protein (272 aa).

Helical transmembrane passes span 9–29 (GGDI…ASEH) and 252–272 (SHIS…ISFI).

The protein localises to the membrane. This is an uncharacterized protein from Caenorhabditis elegans.